Consider the following 100-residue polypeptide: Urease subunit gamma (100 aa).

Belongs to the urease gamma subunit family. As to quaternary structure, heterotrimer of UreA (gamma), UreB (beta) and UreC (alpha) subunits. Three heterotrimers associate to form the active enzyme.

It is found in the cytoplasm. The enzyme catalyses urea + 2 H2O + H(+) = hydrogencarbonate + 2 NH4(+). It participates in nitrogen metabolism; urea degradation; CO(2) and NH(3) from urea (urease route): step 1/1. The sequence is that of Urease subunit gamma from Thioalkalivibrio sulfidiphilus (strain HL-EbGR7).